A 280-amino-acid chain; its full sequence is MSERLFVLSQHILPKLALTRLAGRFADWKGGGITTAAIRRFIARYNVDMGEAADSDPAAYATFNDFFTRALKPGVRPVADARLVCPVDGAVSQLGAIDSGRIFQAKGRDYSATALLAGDADLAARFADGHFATIYLSPRDYHRIHMPCAGRLLEMTYVPGDLYSVNPATARGVDRLFARNERVVCVFEDEQSQPFVMVLVGATIVGSMATVWHGVVNPPRRPAVEKWDYRGQDIRLAKGEEMGRFLLGSTVVLLYPAGPLKFNPQWQAASPVRMGEAMAS.

Residues aspartate 88, histidine 145, and serine 249 each act as charge relay system; for autoendoproteolytic cleavage activity in the active site. Serine 249 (schiff-base intermediate with substrate; via pyruvic acid; for decarboxylase activity) is an active-site residue. Residue serine 249 is modified to Pyruvic acid (Ser); by autocatalysis.

This sequence belongs to the phosphatidylserine decarboxylase family. PSD-B subfamily. Prokaryotic type I sub-subfamily. As to quaternary structure, heterodimer of a large membrane-associated beta subunit and a small pyruvoyl-containing alpha subunit. The cofactor is pyruvate. Is synthesized initially as an inactive proenzyme. Formation of the active enzyme involves a self-maturation process in which the active site pyruvoyl group is generated from an internal serine residue via an autocatalytic post-translational modification. Two non-identical subunits are generated from the proenzyme in this reaction, and the pyruvate is formed at the N-terminus of the alpha chain, which is derived from the carboxyl end of the proenzyme. The autoendoproteolytic cleavage occurs by a canonical serine protease mechanism, in which the side chain hydroxyl group of the serine supplies its oxygen atom to form the C-terminus of the beta chain, while the remainder of the serine residue undergoes an oxidative deamination to produce ammonia and the pyruvoyl prosthetic group on the alpha chain. During this reaction, the Ser that is part of the protease active site of the proenzyme becomes the pyruvoyl prosthetic group, which constitutes an essential element of the active site of the mature decarboxylase.

Its subcellular location is the cell membrane. The catalysed reaction is a 1,2-diacyl-sn-glycero-3-phospho-L-serine + H(+) = a 1,2-diacyl-sn-glycero-3-phosphoethanolamine + CO2. The protein operates within phospholipid metabolism; phosphatidylethanolamine biosynthesis; phosphatidylethanolamine from CDP-diacylglycerol: step 2/2. Its function is as follows. Catalyzes the formation of phosphatidylethanolamine (PtdEtn) from phosphatidylserine (PtdSer). The sequence is that of Phosphatidylserine decarboxylase proenzyme from Chromobacterium violaceum (strain ATCC 12472 / DSM 30191 / JCM 1249 / CCUG 213 / NBRC 12614 / NCIMB 9131 / NCTC 9757 / MK).